Consider the following 510-residue polypeptide: NAD(P)H-quinone oxidoreductase subunit 2 B, chloroplastic (510 aa).

13 helical membrane-spanning segments follow: residues 24–44, 57–77, 99–119, 124–144, 149–169, 183–203, 227–247, 295–315, 323–343, 354–374, 395–415, 418–438, and 484–504; these read LLLF…GLIL, IPWL…ALLF, IFQF…VEYI, MAIT…MFLC, LITI…LSGY, YLLM…WLYG, PGIS…LSLA, WHLL…LIAI, MLAY…IVGD, YMLF…LFGL, ALSL…AGFF, LHLF…IGLL, and MIVC…IIAI.

Belongs to the complex I subunit 2 family. NDH is composed of at least 16 different subunits, 5 of which are encoded in the nucleus.

The protein resides in the plastid. Its subcellular location is the chloroplast thylakoid membrane. It catalyses the reaction a plastoquinone + NADH + (n+1) H(+)(in) = a plastoquinol + NAD(+) + n H(+)(out). The catalysed reaction is a plastoquinone + NADPH + (n+1) H(+)(in) = a plastoquinol + NADP(+) + n H(+)(out). Its function is as follows. NDH shuttles electrons from NAD(P)H:plastoquinone, via FMN and iron-sulfur (Fe-S) centers, to quinones in the photosynthetic chain and possibly in a chloroplast respiratory chain. The immediate electron acceptor for the enzyme in this species is believed to be plastoquinone. Couples the redox reaction to proton translocation, and thus conserves the redox energy in a proton gradient. The protein is NAD(P)H-quinone oxidoreductase subunit 2 B, chloroplastic of Citrus sinensis (Sweet orange).